We begin with the raw amino-acid sequence, 500 residues long: Maturase K (500 aa).

This sequence belongs to the intron maturase 2 family. MatK subfamily.

The protein resides in the plastid. Its subcellular location is the chloroplast. In terms of biological role, usually encoded in the trnK tRNA gene intron. Probably assists in splicing its own and other chloroplast group II introns. This is Maturase K from Adiantum capillus-veneris (Maidenhair fern).